Consider the following 205-residue polypeptide: Protein Nef (205 aa).

Residue glycine 2 is the site of N-myristoyl glycine; by host attachment. Position 6 is a phosphoserine; by host (serine 6). The acidic; interacts with host PACS1 and PACS2; stabilizes the interaction of NEF/MHC-I with host AP1M1; necessary for MHC-I internalization stretch occupies residues 61–65 (EESEE). Positions 69–78 (PVRPQVPLRP) are SH3-binding; interaction with Src family tyrosine kinases. The short motif at 72–75 (PQVP) is the PxxP; stabilizes the interaction of NEF/MHC-I with host AP1M1; necessary for MHC-I internalization element. Residues 108 to 124 (EILDLWVYHTQGFFPDW) form a mediates dimerization, Nef-PTE1 interaction region. The binding to ATP6V1H stretch occupies residues 148–180 (VDPREVEEANTGENNCLLHPMSQHGMDDDEREV). Residues 164-165 (LL) carry the Dileucine internalization motif; necessary for CD4 internalization motif. Residues 174-175 (DD) carry the Diacidic; necessary for CD4 internalization motif.

It belongs to the lentivirus primate group Nef protein family. As to quaternary structure, monomer; cytosolic form. Homodimer; membrane bound form. Interacts with Nef associated p21-activated kinase (PAK2); this interaction activates PAK2. Associates with the Nef-MHC-I-AP1 complex; this complex is required for MHC-I internalization. Interacts (via C-terminus) with host PI3-kinase. Interacts with host PACS1; this interaction seems to be weak. Interacts with host PACS2. Interacts with host LCK and MAPK3; these interactions inhibit the kinase activity of the latter. Interacts with host ATP6V1H; this interaction may play a role in CD4 endocytosis. Associates with the CD4-Nef-AP2 complex; this complex is required for CD4 internalization. Interacts with host AP2 subunit alpha and AP2 subunit sigma2. Interacts with TCR-zeta chain; this interaction up-regulates the Fas ligand (FasL) surface expression. Interacts with host HCK, LYN, and SRC; these interactions activate the Src family kinases. Interacts with MAP3K5; this interaction inhibits the Fas and TNFR-mediated death signals. Interacts with beta-COP and PTE1. Interacts with human RACK1; this increases Nef phosphorylation by PKC. Interacts with TP53; this interaction decreases the half-life of TP53, protecting the infected cell against p53-mediated apoptosis. Post-translationally, the virion-associated Nef proteins are cleaved by the viral protease to release the soluble C-terminal core protein. Nef is probably cleaved concomitantly with viral structural proteins on maturation of virus particles. In terms of processing, myristoylated. Phosphorylated on serine residues, probably by host PKCdelta and theta.

It is found in the host cell membrane. The protein localises to the virion. It localises to the secreted. Its subcellular location is the host Golgi apparatus membrane. Functionally, factor of infectivity and pathogenicity, required for optimal virus replication. Alters numerous pathways of T-lymphocyte function and down-regulates immunity surface molecules in order to evade host defense and increase viral infectivity. Alters the functionality of other immunity cells, like dendritic cells, monocytes/macrophages and NK cells. In terms of biological role, in infected CD4(+) T-lymphocytes, down-regulates the surface MHC-I, mature MHC-II, CD4, CD28, CCR5 and CXCR4 molecules. Mediates internalization and degradation of host CD4 through the interaction of with the cytoplasmic tail of CD4, the recruitment of AP-2 (clathrin adapter protein complex 2), internalization through clathrin coated pits, and subsequent transport to endosomes and lysosomes for degradation. Diverts host MHC-I molecules to the trans-Golgi network-associated endosomal compartments by an endocytic pathway to finally target them for degradation. MHC-I down-regulation may involve AP-1 (clathrin adapter protein complex 1) or possibly Src family kinase-ZAP70/Syk-PI3K cascade recruited by PACS2. In consequence infected cells are masked for immune recognition by cytotoxic T-lymphocytes. Decreasing the number of immune receptors also prevents reinfection by more HIV particles (superinfection). Down-regulates host SERINC3 and SERINC5 thereby excluding these proteins from the viral particles. Virion infectivity is drastically higher when SERINC3 or SERINC5 are excluded from the viral envelope, because these host antiviral proteins impair the membrane fusion event necessary for subsequent virion penetration. Bypasses host T-cell signaling by inducing a transcriptional program nearly identical to that of anti-CD3 cell activation. Interaction with TCR-zeta chain up-regulates the Fas ligand (FasL). Increasing surface FasL molecules and decreasing surface MHC-I molecules on infected CD4(+) cells send attacking cytotoxic CD8+ T-lymphocytes into apoptosis. Its function is as follows. Plays a role in optimizing the host cell environment for viral replication without causing cell death by apoptosis. Protects the infected cells from apoptosis in order to keep them alive until the next virus generation is ready to strike. Inhibits the Fas and TNFR-mediated death signals by blocking MAP3K5/ASK1. Decreases the half-life of TP53, protecting the infected cell against p53-mediated apoptosis. Inhibits the apoptotic signals regulated by the Bcl-2 family proteins through the formation of a Nef/PI3-kinase/PAK2 complex that leads to activation of PAK2 and induces phosphorylation of host BAD. Functionally, extracellular Nef protein targets CD4(+) T-lymphocytes for apoptosis by interacting with CXCR4 surface receptors. The sequence is that of Protein Nef from Human immunodeficiency virus type 1 group M subtype A (isolate Z321) (HIV-1).